A 186-amino-acid chain; its full sequence is Large ribosomal subunit protein uL5 (186 aa).

The protein belongs to the universal ribosomal protein uL5 family. Part of the 50S ribosomal subunit; part of the 5S rRNA/L5/L18/L25 subcomplex. Contacts the 5S rRNA and the P site tRNA. Forms a bridge to the 30S subunit in the 70S ribosome.

Its function is as follows. This is one of the proteins that bind and probably mediate the attachment of the 5S RNA into the large ribosomal subunit, where it forms part of the central protuberance. In the 70S ribosome it contacts protein S13 of the 30S subunit (bridge B1b), connecting the 2 subunits; this bridge is implicated in subunit movement. Contacts the P site tRNA; the 5S rRNA and some of its associated proteins might help stabilize positioning of ribosome-bound tRNAs. In Ruegeria pomeroyi (strain ATCC 700808 / DSM 15171 / DSS-3) (Silicibacter pomeroyi), this protein is Large ribosomal subunit protein uL5.